A 301-amino-acid polypeptide reads, in one-letter code: MTATFIKTSRGKSPASLSSVGDYVQLLKPRIMCLVVFTAITGMLIAPGTIHPLIGLVSTVCVALGAGAAGAFNMWYDSDIDAIMDRTKGRPIPAGKICREQAWECGMVLATLSVFVMAIAVNYVSALLLAGSIFSYAVVYTMLLKRRTPQNIVIGGIAGAFPPVIGWASVSGTLSLESLSLFAIIFVWTPPHFWAIALLTLEEYKKANVPMLPVYCIRKTRSHILLYSIILAVVGATPGLFVKHPVLYEILATGLSATFIAYAIAVFREKGQPSHKACMGLFKYSIYYLFLLFAVVIACVH.

9 consecutive transmembrane segments (helical) span residues 34 to 54, 55 to 75, 102 to 121, 125 to 144, 152 to 172, 181 to 201, 222 to 242, 247 to 267, and 280 to 300; these read LVVFTAITGMLIAPGTIHPLI, GLVSTVCVALGAGAAGAFNMW, AWECGMVLATLSVFVMAIAV, SALLLAGSIFSYAVVYTMLL, IVIGGIAGAFPPVIGWASVSG, LFAIIFVWTPPHFWAIALLTL, SHILLYSIILAVVGATPGLFV, LYEILATGLSATFIAYAIAVF, and GLFKYSIYYLFLLFAVVIACV.

Belongs to the UbiA prenyltransferase family. Protoheme IX farnesyltransferase subfamily.

Its subcellular location is the cell inner membrane. It catalyses the reaction heme b + (2E,6E)-farnesyl diphosphate + H2O = Fe(II)-heme o + diphosphate. The protein operates within porphyrin-containing compound metabolism; heme O biosynthesis; heme O from protoheme: step 1/1. In terms of biological role, converts heme B (protoheme IX) to heme O by substitution of the vinyl group on carbon 2 of heme B porphyrin ring with a hydroxyethyl farnesyl side group. This Anaplasma marginale (strain Florida) protein is Protoheme IX farnesyltransferase.